The sequence spans 816 residues: Leucine--tRNA ligase (816 aa).

Residues 40–51 (SYPSGAQLHAGH) carry the 'HIGH' region motif. The 'KMSKS' region motif lies at 576-580 (KMSKS). Position 579 (K579) interacts with ATP.

This sequence belongs to the class-I aminoacyl-tRNA synthetase family.

Its subcellular location is the cytoplasm. The catalysed reaction is tRNA(Leu) + L-leucine + ATP = L-leucyl-tRNA(Leu) + AMP + diphosphate. The sequence is that of Leucine--tRNA ligase from Clostridium beijerinckii (strain ATCC 51743 / NCIMB 8052) (Clostridium acetobutylicum).